The primary structure comprises 451 residues: tRNA-2-methylthio-N(6)-dimethylallyladenosine synthase (451 aa).

Residues 6-122 (RRYHIITFGC…LDQLLEQVWA (117 aa)) form the MTTase N-terminal domain. 6 residues coordinate [4Fe-4S] cluster: Cys15, Cys51, Cys85, Cys157, Cys161, and Cys164. One can recognise a Radical SAM core domain in the interval 143–384 (RESTVSAWVN…STQAMERSQR (242 aa)). The 65-residue stretch at 383–447 (QRYLGRVEEV…AFSLTGEALS (65 aa)) folds into the TRAM domain.

This sequence belongs to the methylthiotransferase family. MiaB subfamily. In terms of assembly, monomer. The cofactor is [4Fe-4S] cluster.

The protein resides in the cytoplasm. It carries out the reaction N(6)-dimethylallyladenosine(37) in tRNA + (sulfur carrier)-SH + AH2 + 2 S-adenosyl-L-methionine = 2-methylsulfanyl-N(6)-dimethylallyladenosine(37) in tRNA + (sulfur carrier)-H + 5'-deoxyadenosine + L-methionine + A + S-adenosyl-L-homocysteine + 2 H(+). Catalyzes the methylthiolation of N6-(dimethylallyl)adenosine (i(6)A), leading to the formation of 2-methylthio-N6-(dimethylallyl)adenosine (ms(2)i(6)A) at position 37 in tRNAs that read codons beginning with uridine. The polypeptide is tRNA-2-methylthio-N(6)-dimethylallyladenosine synthase (Synechocystis sp. (strain ATCC 27184 / PCC 6803 / Kazusa)).